Reading from the N-terminus, the 130-residue chain is Ribosome-binding factor A (130 aa).

Belongs to the RbfA family. Monomer. Binds 30S ribosomal subunits, but not 50S ribosomal subunits or 70S ribosomes.

It localises to the cytoplasm. One of several proteins that assist in the late maturation steps of the functional core of the 30S ribosomal subunit. Associates with free 30S ribosomal subunits (but not with 30S subunits that are part of 70S ribosomes or polysomes). Required for efficient processing of 16S rRNA. May interact with the 5'-terminal helix region of 16S rRNA. This chain is Ribosome-binding factor A, found in Prochlorococcus marinus (strain MIT 9312).